The following is a 225-amino-acid chain: Insulin-induced gene 2 protein (225 aa).

At 1 to 28 (MAEGETKSPGPKKCGPYISSVTSQSVNL) the chain is on the cytoplasmic side. Residues 29-51 (MIRGVVLFFIGVFLALVLNLLQI) form a helical membrane-spanning segment. Residues 52-70 (QRNVTLFPPDVIASIFSSA) are Lumenal-facing. The chain crosses the membrane as a helical span at residues 71 to 88 (WWVPPCCGTASAVIGLLY). The Cytoplasmic portion of the chain corresponds to 89-103 (PCIDRHLGEPHKFKR). A helical transmembrane segment spans residues 104-126 (EWSSVMRCVAVFVGINHASAKVD). The Lumenal portion of the chain corresponds to 127-129 (FDN). The helical transmembrane segment at 130–148 (NIQLSLTLAALSIGLWWTF) threads the bilayer. Over 149-153 (DRSRS) the chain is Cytoplasmic. Ser151 bears the Phosphoserine mark. The chain crosses the membrane as a helical span at residues 154–175 (GFGLGVGIAFLATVVTQLLVYN). Residues 176–189 (GVYQYTSPDFLYVR) are Lumenal-facing. Residues 190–207 (SWLPCIFFAGGITMGNIG) traverse the membrane as a helical segment. Over 208-225 (RQLAMYECKVIAEKSHQE) the chain is Cytoplasmic. Cysteine sulfenic acid (-SOH); alternate is present on Cys215. Cys215 participates in a covalent cross-link: Glycyl cysteine thioester (Cys-Gly) (interchain with G-Cter in ubiquitin); alternate. The short motif at 219–225 (AEKSHQE) is the KxHxx element.

The protein belongs to the INSIG family. Interacts with SCAP; interaction is direct and only takes place in the presence of sterols; it prevents interaction between SCAP and the coat protein complex II (COPII). Associates with the SCAP-SREBP complex (composed of SCAP and SREBF1/SREBP1 or SREBF2/SREBP2); association is mediated via its interaction with SCAP and only takes place in the presence of sterols. Interacts with RNF139. Interacts with RNF145. Post-translationally, phosphorylation at Ser-151 by PCK1 reduces binding to oxysterol, disrupting the interaction between INSIG2 and SCAP, thereby promoting nuclear translocation of SREBP proteins (SREBF1/SREBP1 or SREBF2/SREBP2) and subsequent transcription of downstream lipogenesis-related genes. Polyubiquitinated by AMFR/gp78 at Cys-215 in some tissues such as adipose tissues, undifferentiated myoblasts and liver, leading to its degradation. In differentiated myotubes, Cys-215 oxidation prevents ubiquitination at the same site, resulting in protein stabilization. In terms of processing, oxidized at Cys-215 in differentiated myotubes, preventing ubiquitination at the same site, and resulting in protein stabilization.

It is found in the endoplasmic reticulum membrane. Functionally, oxysterol-binding protein that mediates feedback control of cholesterol synthesis by controlling both endoplasmic reticulum to Golgi transport of SCAP and degradation of HMGCR. Acts as a negative regulator of cholesterol biosynthesis by mediating the retention of the SCAP-SREBP complex in the endoplasmic reticulum, thereby blocking the processing of sterol regulatory element-binding proteins (SREBPs) SREBF1/SREBP1 and SREBF2/SREBP2. Binds oxysterol, including 22-hydroxycholesterol, 24-hydroxycholesterol, 25-hydroxycholesterol and 27-hydroxycholesterol, regulating interaction with SCAP and retention of the SCAP-SREBP complex in the endoplasmic reticulum. In presence of oxysterol, interacts with SCAP, retaining the SCAP-SREBP complex in the endoplasmic reticulum, thereby preventing SCAP from escorting SREBF1/SREBP1 and SREBF2/SREBP2 to the Golgi. Sterol deprivation or phosphorylation by PCK1 reduce oxysterol-binding, disrupting the interaction between INSIG2 and SCAP, thereby promoting Golgi transport of the SCAP-SREBP complex, followed by processing and nuclear translocation of SREBF1/SREBP1 and SREBF2/SREBP2. Also regulates cholesterol synthesis by regulating degradation of HMGCR: initiates the sterol-mediated ubiquitin-mediated endoplasmic reticulum-associated degradation (ERAD) of HMGCR via recruitment of the reductase to the ubiquitin ligase RNF139. This Pongo abelii (Sumatran orangutan) protein is Insulin-induced gene 2 protein.